We begin with the raw amino-acid sequence, 281 residues long: Acidic leucine-rich nuclear phosphoprotein 32-related protein (281 aa).

4 LRR repeats span residues 29–52, 56–78, 79–103, and 105–128; these read YESL…EKEL, FKNL…IPSI, ATLN…IVQN, and PNIK…TLKE. The LRRCT domain occupies 140-178; sequence NPFADNPNYRKELFEFLPNVKIIDCYNKEGMEVLSSDEE. The span at 197–244 shows a compositional bias: acidic residues; it reads FKDEDDEDEEFVPNDNEDDDEDDELDDDLEDEDMEDLDKEDLDKEDYD. The tract at residues 197–281 is disordered; the sequence is FKDEDDEDEE…DMDLKKTKLE (85 aa). Residues 245 to 266 show a composition bias toward basic and acidic residues; the sequence is IDTKETEGVNKDEKSNKRKQDA.

It belongs to the ANP32 family.

The polypeptide is Acidic leucine-rich nuclear phosphoprotein 32-related protein (Plasmodium falciparum (isolate 3D7)).